The chain runs to 2467 residues: Polyprotein P1234 (2467 aa).

The 232-residue stretch at 27–258 (ESQQVTPNDH…ESRKLLRSWH (232 aa)) folds into the Alphavirus-like MT domain. The nsP1 membrane-binding stretch occupies residues 243–262 (GSTLYTESRKLLRSWHLPSV). 2 S-palmitoyl cysteine; by host lipidation sites follow: cysteine 416 and cysteine 418. The 153-residue stretch at 689–841 (DLINPPFHEF…HNICTRVLHK (153 aa)) folds into the (+)RNA virus helicase ATP-binding domain. 720–727 (GVPGSGKS) is an a ribonucleoside 5'-triphosphate binding site. The region spanning 842–990 (SISRRCTLPV…LEEWQEEHDG (149 aa)) is the (+)RNA virus helicase C-terminal domain. The Peptidase C9 domain occupies 1003 to 1325 (DPFQNKAKVC…QKLSSMYACN (323 aa)). The segment at 1004 to 1023 (PFQNKAKVCWAKCLVQVLET) is nucleolus localization signal. Cysteine 1012 serves as the catalytic For cysteine protease nsP2 activity. Positions 1056–1065 (TRYYGVDLDS) match the Nuclear export signal motif. Histidine 1081 (for cysteine protease nsP2 activity) is an active-site residue. The Nuclear localization signal motif lies at 1180–1184 (PHKRV). Residues 1332 to 1492 (CAPSYRVRRA…KIQEAIDRRT (161 aa)) enclose the Macro domain. ADP-D-ribose is bound by residues aspartate 1342, asparagine 1356, glycine 1364, glycine 1444, and phenylalanine 1446. The Zn(2+) site is built by cysteine 1594, cysteine 1596, cysteine 1619, and cysteine 1637. The tract at residues 1766 to 1803 (VRKVATEPPSEPEAPIPAPRKRRTTSTTPPHNPGDFVP) is disordered. Pro residues predominate over residues 1774–1783 (PSEPEAPIPA). 2 short sequence motifs (FGDF; binding to host G3BP1) span residues 1820-1823 (FGDL) and 1841-1844 (FGDI). A RdRp catalytic domain is found at 2222 to 2337 (AVLETDIASF…GVRSDPLMAE (116 aa)).

In terms of assembly, interacts with non-structural protein 3. Interacts with RNA-directed RNA polymerase nsP4. Interacts with protease nsP2. interacts with itself. As to quaternary structure, interacts with mRNA-capping enzyme nsP1. Interacts with host DDX1. Interacts with host DDX3. Interacts (via C-terminus) with host G3BP1; this interaction inhibits the formation of host stress granules on viral mRNAs and the nsp3-G3BP1 complexes bind viral RNAs and probably orchestrate the assembly of viral replication complexes. Interacts (via C-terminus) with host G3BP2; this interaction inhibits the formation of host stress granules on viral mRNAs and the nsp3-G3BP2 complexes bind viral RNAs and probably orchestrate the assembly of viral replication complexes. Interacts with mRNA-capping enzyme nsP1. Interacts with protease nsP2. interacts with itself. In terms of assembly, interacts with RNA-directed RNA polymerase nsP4. Interacts with mRNA-capping enzyme nsP1. Interacts with KPNA1/karyopherin-alpha1; this interaction probably allows the active transport of protease nsP2 into the host nucleus. Mg(2+) is required as a cofactor. Mn(2+) serves as cofactor. Post-translationally, specific enzymatic cleavages in vivo yield mature proteins. The processing of the polyprotein is temporally regulated. In early stages (1.7 hpi), P1234 is first cleaved in trans through its nsP2 protease activity, releasing P123' and nsP4, which associate to form the early replication complex. At the same time, P1234 is also cut at the nsP1/nsP2 site early in infection but with lower efficiency. After replication of the viral minus-strand RNAs (4 hpi), the polyproteins are cut at the nsP1/nsP2 and nsP2/nsP3 sites very efficiently, preventing accumulation of P123' and P1234 and allowing the formation of the late replication complex. NsP3'/nsP4 site is not cleaved anymore and P34 is produced rather than nsP4. In terms of processing, specific enzymatic cleavages in vivo yield mature proteins. The processing of the polyprotein is temporally regulated. In early stages (1.7 hpi), P123 is cleaved at the nsP1/nsP2 site with low efficiency. After replication of the viral minus-strand RNAs (4 hpi), the polyproteins are cut at the nsP1/nsP2 and nsP2/nsP3 sites very efficiently, preventing accumulation of P123 and allowing the formation of the late replication complex. Specific enzymatic cleavages in vivo yield mature proteins. The processing of the polyprotein is temporally regulated. In early stages (1.7 hpi), P123' is cleaved at the nsP1/nsP2 site with low efficiency. After replication of the viral minus-strand RNAs (4 hpi), the polyproteins are cut at the nsP1/nsP2 and nsP2/nsP3 sites very efficiently, preventing accumulation of P123' and allowing the formation of the late replication complex. Post-translationally, palmitoylated by host palmitoyltransferases ZDHHC2 and ZDHHC19. In terms of processing, phosphorylated by host on serines and threonines. Ubiquitinated; targets the protein for rapid degradation via the ubiquitin system. Nsp4 is present in extremely low quantities due to low frequency of translation through the amber stop-codon and the degradation by the ubiquitin pathway.

The protein localises to the host cytoplasmic vesicle membrane. It is found in the host cell membrane. It localises to the host cell projection. The protein resides in the host filopodium. Its subcellular location is the host nucleus. The protein localises to the host cytoplasm. The catalysed reaction is GTP + S-adenosyl-L-methionine = N(7)-methyl-GTP + S-adenosyl-L-homocysteine. The enzyme catalyses N(7)-methyl-GTP + L-histidyl-[protein] = N(tele)-(N(7)-methylguanosine 5'-phospho)-L-histidyl-[protein] + diphosphate. It carries out the reaction N(tele)-(N(7)-methylguanosine 5'-phospho)-L-histidyl-[protein] + a 5'-end diphospho-(purine-ribonucleoside) in mRNA + H(+) = a 5'-end (N(7)-methyl 5'-triphosphoguanosine)-(purine-ribonucleoside) in mRNA + L-histidyl-[protein]. It catalyses the reaction a 5'-end triphospho-ribonucleoside in mRNA + H2O = a 5'-end diphospho-ribonucleoside in mRNA + phosphate + H(+). The catalysed reaction is a ribonucleoside 5'-triphosphate + H2O = a ribonucleoside 5'-diphosphate + phosphate + H(+). The enzyme catalyses ATP + H2O = ADP + phosphate + H(+). It carries out the reaction RNA(n) + a ribonucleoside 5'-triphosphate = RNA(n+1) + diphosphate. It catalyses the reaction RNA(n) + ATP = RNA(n)-3'-adenine ribonucleotide + diphosphate. The catalysed reaction is 4-O-(ADP-D-ribosyl)-L-aspartyl-[protein] + H2O = L-aspartyl-[protein] + ADP-D-ribose + H(+). The enzyme catalyses 5-O-(ADP-D-ribosyl)-L-glutamyl-[protein] + H2O = L-glutamyl-[protein] + ADP-D-ribose + H(+). It carries out the reaction ADP-alpha-D-ribose 1''-phosphate + H2O = ADP-D-ribose + phosphate. Its function is as follows. Inactive precursor of the viral replicase, which is activated by cleavages carried out by the viral protease nsP2. The early replication complex formed by the polyprotein P123 and nsP4 synthesizes minus-strand RNAs. As soon P123 is cleaved into mature proteins, the plus-strand RNAs synthesis begins. In terms of biological role, the early replication complex formed by the polyprotein P123' and nsP4 synthesizes minus-strand RNAs. Polyprotein P123' is a short-lived polyprotein that accumulates during early stage of infection. As soon P123' is cleaved into mature proteins, the plus-strand RNAs synthesis begins. Functionally, cytoplasmic capping enzyme that catalyzes two virus-specific reactions: methyltransferase and nsP1 guanylyltransferase. mRNA-capping is necessary since all viral RNAs are synthesized in the cytoplasm, and host capping enzymes are restricted to the nucleus. The enzymatic reaction involves a covalent link between 7-methyl-GMP and nsP1, whereas eukaryotic capping enzymes form a covalent complex only with GMP. nsP1 capping consists in the following reactions: GTP is first methylated into 7-methyl-GMP and then is covalently linked to nsP1 to form the m7GMp-nsP1 complex from which 7-methyl-GMP complex is transferred to the mRNA to create the cap structure. NsP1 is needed for the initiation of the minus-strand RNAs synthesis. Probably serves as a membrane anchor for the replication complex composed of nsP1-nsP4. Palmitoylated nsP1 is remodeling host cell cytoskeleton, and induces filopodium-like structure formation at the surface of the host cell. Its function is as follows. Multifunctional protein whose N-terminus is part of the RNA polymerase complex and displays NTPase, RNA triphosphatase and helicase activities. NTPase and RNA triphosphatase are involved in viral RNA capping and helicase keeps a check on the dsRNA replication intermediates. The C-terminus harbors a protease that specifically cleaves the polyproteins and releases the mature proteins. Required for the shutoff of minus-strand RNAs synthesis. Specifically inhibits the host IFN response by promoting the nuclear export of host STAT1. Also inhibits host transcription by inducing rapid proteasome-dependent degradation of POLR2A, a catalytic subunit of the RNAPII complex. The resulting inhibition of cellular protein synthesis serves to ensure maximal viral gene expression and to evade host immune response. Seems to be essential for minus-strand RNAs and subgenomic 26S mRNAs synthesis. Displays mono-ADP-ribosylhydrolase activity. ADP-ribosylation is a post-translational modification that controls various processes of the host cell and the virus probably needs to revert it for optimal viral replication. Binds proteins of FXR family and sequesters them into the viral RNA replication complexes thereby inhibiting the formation of host stress granules on viral mRNAs. The nsp3'-FXR complexes bind viral RNAs and probably orchestrate the assembly of viral replication complexes, thanks to the ability of FXR family members to self-assemble and bind DNA. In terms of biological role, seems to be essential for minus-strand RNAs and subgenomic 26S mRNAs synthesis. Displays mono-ADP-ribosylhydrolase activity. ADP-ribosylation is a post-translantional modification that controls various processes of the host cell and the virus probably needs to revert it for optimal viral replication. Binds proteins of G3BP family and sequesters them into the viral RNA replication complexes thereby inhibiting the formation of host stress granules on viral mRNAs. The nsp3-G3BP complexes bind viral RNAs and probably orchestrate the assembly of viral replication complexes, thanks to the ability of G3BP family members to self-assemble and bind DNA. Functionally, RNA dependent RNA polymerase. Replicates genomic and antigenomic RNA by recognizing replications specific signals. The early replication complex formed by the polyprotein P123 and nsP4 synthesizes minus-strand RNAs. The late replication complex composed of fully processed nsP1-nsP4 is responsible for the production of genomic and subgenomic plus-strand RNAs. The core catalytic domain of nsP4 also possesses terminal adenylyltransferase (TATase) activity that is probably involved in maintenance and repair of the poly(A) tail, an element required for replication of the viral genome. The polypeptide is Polyprotein P1234 (Sagiyama virus (SAGV)).